The chain runs to 504 residues: Maturase K (504 aa).

This sequence belongs to the intron maturase 2 family. MatK subfamily.

Its subcellular location is the plastid. It localises to the chloroplast. Its function is as follows. Usually encoded in the trnK tRNA gene intron. Probably assists in splicing its own and other chloroplast group II introns. The protein is Maturase K of Alliaria petiolata (Garlic mustard).